Here is a 91-residue protein sequence, read N- to C-terminus: Tityustoxin-19 (91 aa).

Positions 1–25 are cleaved as a signal peptide; it reads MVATNRCCVFALLFALLLVHSLTEA. In terms of domain architecture, BetaSPN-type CS-alpha/beta spans 58–91; it reads EYACPAIDKFCEDHCAAKKAVGKCDDFKCNCIKL. Disulfide bonds link Cys-61–Cys-81, Cys-68–Cys-86, and Cys-72–Cys-88.

The protein belongs to the long chain scorpion toxin family. Class 2 subfamily. As to expression, expressed by the venom gland.

It localises to the secreted. In terms of biological role, may function as a voltage-gated potassium channel blocker and may have cytolytic activity. Is often not detected in the tested venom fractions, suggesting that the toxin is likely subject to frequent processing within the venom. Functionally, specific and reversible blocker of the potassium channel Kv1.2/KCNA2 (IC(50)=544 nM). Shows cytolytic effects on erythrocytes and induces non-selective pore formation when high concentrations (300 nM) are applied on oocytes. Its function is as follows. Does not cause hemolysis, mast cell degranulation, LDH release, and does not have antimicrobial activity. Does not cause edema and pain. The polypeptide is Tityustoxin-19 (Tityus serrulatus (Brazilian scorpion)).